We begin with the raw amino-acid sequence, 198 residues long: FMN-dependent NADH:quinone oxidoreductase (198 aa).

FMN is bound by residues Ser-10, 16–18 (SQS), 94–97 (MYNF), and 138–141 (TRGG).

Belongs to the azoreductase type 1 family. In terms of assembly, homodimer. It depends on FMN as a cofactor.

It catalyses the reaction 2 a quinone + NADH + H(+) = 2 a 1,4-benzosemiquinone + NAD(+). The catalysed reaction is N,N-dimethyl-1,4-phenylenediamine + anthranilate + 2 NAD(+) = 2-(4-dimethylaminophenyl)diazenylbenzoate + 2 NADH + 2 H(+). Quinone reductase that provides resistance to thiol-specific stress caused by electrophilic quinones. Its function is as follows. Also exhibits azoreductase activity. Catalyzes the reductive cleavage of the azo bond in aromatic azo compounds to the corresponding amines. The chain is FMN-dependent NADH:quinone oxidoreductase from Shewanella baltica (strain OS195).